A 395-amino-acid polypeptide reads, in one-letter code: ADP-ribosylation factor-like protein 13A (395 aa).

GTP-binding positions include 28–35 (GLDNSGKS), 71–75 (DLTGD), and 130–133 (NKQD).

Belongs to the small GTPase superfamily. Arf family.

The chain is ADP-ribosylation factor-like protein 13A (Arl13a) from Rattus norvegicus (Rat).